We begin with the raw amino-acid sequence, 244 residues long: Ribosomal RNA small subunit methyltransferase G (244 aa).

S-adenosyl-L-methionine-binding positions include Gly-79, Phe-84, Ala-130–Glu-131, and Arg-150. Residues Lys-221–Met-244 form a disordered region.

The protein belongs to the methyltransferase superfamily. RNA methyltransferase RsmG family.

It is found in the cytoplasm. In terms of biological role, specifically methylates the N7 position of a guanine in 16S rRNA. The protein is Ribosomal RNA small subunit methyltransferase G of Lactiplantibacillus plantarum (strain ATCC BAA-793 / NCIMB 8826 / WCFS1) (Lactobacillus plantarum).